The following is a 223-amino-acid chain: Cytidylate kinase (223 aa).

10–18 (GPAGAGKST) contributes to the ATP binding site.

This sequence belongs to the cytidylate kinase family. Type 1 subfamily.

The protein resides in the cytoplasm. The catalysed reaction is CMP + ATP = CDP + ADP. It carries out the reaction dCMP + ATP = dCDP + ADP. The sequence is that of Cytidylate kinase from Exiguobacterium sibiricum (strain DSM 17290 / CCUG 55495 / CIP 109462 / JCM 13490 / 255-15).